Here is a 1877-residue protein sequence, read N- to C-terminus: Neuron navigator 1 (1877 aa).

N-acetylmethionine is present on Met1. Positions 1–59 (MLGSSVKSVQPEVELSSGGGDEGADEPRGAGRKAAAADGRGMLPKRAKAPGGGGGMAKA) are disordered. Low complexity predominate over residues 32 to 41 (RKAAAADGRG). 3 positions are modified to phosphoserine: Ser90, Ser142, and Ser152. Positions 114–225 (DMAKAPKGLG…PVPSAKGQEE (112 aa)) are disordered. Thr159 carries the post-translational modification Phosphothreonine. Residues Ser194 and Ser199 each carry the phosphoserine modification. Residues 205–214 (SSKAKAQKSS) show a composition bias toward low complexity. A coiled-coil region spans residues 255–280 (ESQRKRTVQNVLDLRQNLEETMSSLR). The disordered stretch occupies residues 294 to 336 (YDSDDANPRSVSSLSNRSSPLSWRYGQSSPRLQAGDAPSVGGS). Phosphoserine is present on residues Ser296, Ser308, Ser312, Ser362, and Ser391. The segment covering 301–315 (PRSVSSLSNRSSPLS) has biased composition (low complexity). Disordered regions lie at residues 386 to 839 (KSGY…PLPS) and 892 to 989 (MSLP…PMSL). Low complexity-rich tracts occupy residues 411–425 (DESS…DASD) and 433–448 (NASS…PTAS). 4 positions are modified to phosphoserine: Ser452, Ser474, Ser476, and Ser490. Over residues 476–486 (SEEKAPKKLEY) the composition is skewed to basic and acidic residues. Residues 503–519 (ERPESCDDSSKGGELKK) show a composition bias toward basic and acidic residues. Ser528 is subject to Phosphoserine. A Phosphothreonine modification is found at Thr534. Phosphoserine is present on Ser541. Thr544 carries the phosphothreonine modification. The segment covering 555-566 (GKPEGKATDKGK) has biased composition (basic and acidic residues). Thr572 carries the post-translational modification Phosphothreonine. The span at 581 to 591 (AGRDRLSDAKK) shows a compositional bias: basic and acidic residues. 2 stretches are compositionally biased toward polar residues: residues 615 to 635 (GTAT…QKSS) and 645 to 655 (RKTSLDVSNSA). Ser648 carries the phosphoserine modification. At Arg688 the chain carries Omega-N-methylarginine. Composition is skewed to polar residues over residues 698–710 (IDPS…QGGL) and 724–733 (GRTTPAPVNQ). The stretch at 731 to 756 (VNQTDREKEKAKAKAVALDSDNISLK) forms a coiled coil. Ser750, Ser754, Ser760, Ser797, and Ser808 each carry phosphoserine. The span at 751–773 (DNISLKSIGSPESTPKNQASHPT) shows a compositional bias: polar residues. Over residues 805–818 (NSNSLDLPSSSDTT) the composition is skewed to low complexity. Residues 902–913 (TPVPTPPAPPAA) show a composition bias toward pro residues. Ser1000 bears the Phosphoserine mark. Thr1006 carries the phosphothreonine modification. Positions 1072–1163 (SSAEERMQSE…SEAQAVIQGA (92 aa)) form a coiled coil. Position 1170 is a phosphothreonine (Thr1170). Disordered regions lie at residues 1172-1204 (KELR…KDAD), 1244-1306 (ATPD…EKKE), 1359-1383 (LKVA…LSSP), and 1810-1843 (KLYH…SLDS). Phosphoserine is present on Ser1181. The span at 1181–1200 (SSDSISSLNSITSHSSIGSS) shows a compositional bias: low complexity. Polar residues predominate over residues 1246–1264 (PDSSAPSSPKLQHGSTETA). Residue Ser1265 is modified to Phosphoserine. Low complexity predominate over residues 1265 to 1275 (SPSIKSSTSSS). The stretch at 1303 to 1362 (EKKEVSELRSELWEKEMKLTDIRLEALNSAHQLDQLRETMHNMQLEVDLLKAENDRLKVA) forms a coiled coil. Residues 1366 to 1383 (SSGSTPGQVPGSSALSSP) show a composition bias toward polar residues. Position 1382 is a phosphoserine (Ser1382).

The protein belongs to the Nav/unc-53 family. In terms of assembly, interacts with tubulin. In terms of tissue distribution, broadly expressed at low levels. Expressed at high levels in heart, skeletal muscle and placenta.

The protein resides in the cytoplasm. Its subcellular location is the cytoskeleton. Its function is as follows. May be involved in neuronal migration. This chain is Neuron navigator 1 (NAV1), found in Homo sapiens (Human).